Here is a 193-residue protein sequence, read N- to C-terminus: Cysteine and glycine-rich protein 2 (193 aa).

The 52-residue stretch at 10 to 61 (CGACGRTVYHAEEVQCDGRTFHRCCFLCMVCRKNLDSTTVAIHDEEIYCKSC) folds into the LIM zinc-binding 1 domain. The short motif at 64-69 (KKYGPK) is the Nuclear localization signal element. Lysine 91 is covalently cross-linked (Glycyl lysine isopeptide (Lys-Gly) (interchain with G-Cter in SUMO2)). Residues lysine 112 and lysine 131 each carry the N6-acetyllysine modification. Residues 119–170 (CSRCGDSVYAAEKIIGAGKPWHKNCFRCAKCGKSLESTTLTEKEGEIYCKGC) enclose the LIM zinc-binding 2 domain. Lysine 137 carries the post-translational modification N6-acetyllysine; alternate. Lysine 137 is modified (N6-succinyllysine; alternate). At lysine 161 the chain carries N6-acetyllysine.

In terms of assembly, interacts with KAT14. The LIM domain 1 is necessary and sufficient for this interaction. Interacts with GLRX3. In terms of tissue distribution, highly expressed in the aorta; weakly found in the kidney, thymus, and intestine. Barely detectable in brain, testis, esophagus, lung, liver, aortic adventitia, vena cava, or uterus; not present in heart and skeletal muscle.

It is found in the nucleus. Drastically down-regulated in response to PDGF-BB or cell injury, that promote smooth muscle cell proliferation and dedifferentiation. Seems to play a role in the development of the embryonic vascular system. This Rattus norvegicus (Rat) protein is Cysteine and glycine-rich protein 2 (Csrp2).